The following is a 251-amino-acid chain: Triosephosphate isomerase (251 aa).

Residue 10–12 (NWK) coordinates substrate. Catalysis depends on H95, which acts as the Electrophile. Residue E167 is the Proton acceptor of the active site. Substrate-binding positions include G173, S213, and 234 to 235 (GG).

Belongs to the triosephosphate isomerase family. In terms of assembly, homodimer.

Its subcellular location is the cytoplasm. The catalysed reaction is D-glyceraldehyde 3-phosphate = dihydroxyacetone phosphate. It participates in carbohydrate biosynthesis; gluconeogenesis. It functions in the pathway carbohydrate degradation; glycolysis; D-glyceraldehyde 3-phosphate from glycerone phosphate: step 1/1. Involved in the gluconeogenesis. Catalyzes stereospecifically the conversion of dihydroxyacetone phosphate (DHAP) to D-glyceraldehyde-3-phosphate (G3P). This Acetivibrio thermocellus (strain ATCC 27405 / DSM 1237 / JCM 9322 / NBRC 103400 / NCIMB 10682 / NRRL B-4536 / VPI 7372) (Clostridium thermocellum) protein is Triosephosphate isomerase.